The following is a 362-amino-acid chain: Phosphoserine aminotransferase (362 aa).

R43 is a binding site for L-glutamate. Residues 77–78, W103, T153, D173, and Q196 each bind pyridoxal 5'-phosphate; that span reads AT. K197 bears the N6-(pyridoxal phosphate)lysine mark. Residue 238–239 coordinates pyridoxal 5'-phosphate; sequence NT.

Belongs to the class-V pyridoxal-phosphate-dependent aminotransferase family. SerC subfamily. Homodimer. Pyridoxal 5'-phosphate serves as cofactor.

It is found in the cytoplasm. The enzyme catalyses O-phospho-L-serine + 2-oxoglutarate = 3-phosphooxypyruvate + L-glutamate. It carries out the reaction 4-(phosphooxy)-L-threonine + 2-oxoglutarate = (R)-3-hydroxy-2-oxo-4-phosphooxybutanoate + L-glutamate. Its pathway is amino-acid biosynthesis; L-serine biosynthesis; L-serine from 3-phospho-D-glycerate: step 2/3. The protein operates within cofactor biosynthesis; pyridoxine 5'-phosphate biosynthesis; pyridoxine 5'-phosphate from D-erythrose 4-phosphate: step 3/5. In terms of biological role, catalyzes the reversible conversion of 3-phosphohydroxypyruvate to phosphoserine and of 3-hydroxy-2-oxo-4-phosphonooxybutanoate to phosphohydroxythreonine. The protein is Phosphoserine aminotransferase of Xylella fastidiosa (strain Temecula1 / ATCC 700964).